We begin with the raw amino-acid sequence, 323 residues long: Methenyltetrahydromethanopterin cyclohydrolase (323 aa).

This sequence belongs to the MCH family.

Its subcellular location is the cytoplasm. The catalysed reaction is 5,10-methenyl-5,6,7,8-tetrahydromethanopterin + H2O = N(5)-formyl-5,6,7,8-tetrahydromethanopterin + H(+). Its pathway is one-carbon metabolism; methanogenesis from CO(2); 5,10-methenyl-5,6,7,8-tetrahydromethanopterin from CO(2): step 3/3. Its function is as follows. Catalyzes the reversible interconversion of 5-formyl-H(4)MPT to methenyl-H(4)MPT(+). This is Methenyltetrahydromethanopterin cyclohydrolase from Methanococcus maripaludis (strain DSM 14266 / JCM 13030 / NBRC 101832 / S2 / LL).